The primary structure comprises 382 residues: MNRTFDRKAYRQELIDAGFSAEDAETIASRTVMRAPRETFQSVGSMVQQATAKIERDSVQLAPPALPAPSAAVERSRRLEQEAAGLAKSMTIDTRGTMTTKKRKTAGEDLAKQVSEAKQAALLKHTKQQIKEMQLSLFDIAPWPDTMRAMPNDTARSALFTTRNKKIPREALQNKVIFHVNKDVKITYTGVELRADDDELVWQQVLEYAKRTPIGEPITFTFYELCQDLGWSINGRYYTKAEECLSRLQATAMGFTSDRVGHLESVSLLHRFRVLDRGKKTSRCQVLIDEEIVVLFAGDHYTKFIWEKYRKLSPTARRMFDYFSSHREPYPLKLETFRLMCGSDSTRVKKWREQVGEACEELRGSGLVEHAWVNDDLVHCKR.

The tract at residues 1–163 (MNRTFDRKAY…TARSALFTTR (163 aa)) is toxic in E.coli strain K12 / DH5-alpha; may be membrane-associated. Positions 246–265 (SRLQATAMGFTSDRVGHLES) form a DNA-binding region, H-T-H motif. Residues 286–297 (VLIDEEIVVLFA) form a hydrophobic region (HR); required for membrane association region.

Forms a dimer in solution, binds DNA as a monomer. Both mononer and dimer of the short form interact with Hda (Dp).

It is found in the cell inner membrane. Functionally, required for initiation of plasmid DNA replication, along with host-derived DnaA and other host proteins. Both forms of the protein are capable of initiating plasmid replication in a number of Gram-negative bacteria. Binds to 8 17-base pair repeat sequences (iterons) in the RK2 minimal replication origin (oriV), opening the origin of replication. oriV opening does not absolutely require the presence of nucleotides; formation of open complex is somewhat enhanced by ATP or ATP gamma S, while DnaA or HU is required for full opening. Its function is as follows. Also involved in plasmid copy number control, promoting intermolecular coupling of protein bound iterons at oriV, which inhibits replication initiation. The polypeptide is Plasmid replication initiator protein TrfA (trfA) (Escherichia coli).